A 232-amino-acid chain; its full sequence is Very-long-chain (3R)-3-hydroxyacyl-CoA dehydratase 4 (232 aa).

Residues 1 to 19 lie on the Cytoplasmic side of the membrane; the sequence is MGPSVLPAWLQPRYRKNVY. The helical transmembrane segment at 20 to 40 threads the bilayer; the sequence is LFIYYLIQFCGHSWILANMTV. At 41 to 56 the chain is on the lumenal side; sequence RFFSFGKDSMADTFYA. The chain crosses the membrane as a helical span at residues 57-77; sequence IGLVMRVCQSISLLELLHIYI. The Cytoplasmic segment spans residues 78–112; it reads GIESNQLFPRFLQLTERVIILFGVITSQEEVQEKC. The chain crosses the membrane as a helical span at residues 113-133; that stretch reads VVCVLFILWNLLDMVRYTYSM. The Lumenal segment spans residues 134–135; that stretch reads LS. The chain crosses the membrane as a helical span at residues 136–156; that stretch reads VIGTSYAALTWLSQTLWMPIY. Residue Tyr-156 is part of the active site. Position 157 (Pro-157) is a topological domain, cytoplasmic. A helical transmembrane segment spans residues 158 to 178; it reads LCVLAEAFTIYQSLPYFESFG. Residue Glu-163 is part of the active site. Residues 179–189 lie on the Lumenal side of the membrane; that stretch reads TNSTVLPFDLS. A helical transmembrane segment spans residues 190-210; the sequence is TCFPYVLKLYLMMLFIGMYFT. At 211–232 the chain is on the cytoplasmic side; that stretch reads YSHLYTERKDFLRVFSVKQKNV.

It belongs to the very long-chain fatty acids dehydratase HACD family. May interact with enzymes of the ELO family (including ELOVL1); with those enzymes that mediate condensation, the first of the four steps of the reaction cycle responsible for fatty acids elongation, may be part of a larger fatty acids elongase complex.

Its subcellular location is the endoplasmic reticulum membrane. The enzyme catalyses a very-long-chain (3R)-3-hydroxyacyl-CoA = a very-long-chain (2E)-enoyl-CoA + H2O. It carries out the reaction (3R)-hydroxyhexadecanoyl-CoA = (2E)-hexadecenoyl-CoA + H2O. It functions in the pathway lipid metabolism; fatty acid biosynthesis. In terms of biological role, catalyzes the third of the four reactions of the long-chain fatty acids elongation cycle. This endoplasmic reticulum-bound enzymatic process, allows the addition of two carbons to the chain of long- and very long-chain fatty acids/VLCFAs per cycle. This enzyme catalyzes the dehydration of the 3-hydroxyacyl-CoA intermediate into trans-2,3-enoyl-CoA, within each cycle of fatty acid elongation. Thereby, it participates in the production of VLCFAs of different chain lengths that are involved in multiple biological processes as precursors of membrane lipids and lipid mediators. In Mus musculus (Mouse), this protein is Very-long-chain (3R)-3-hydroxyacyl-CoA dehydratase 4.